A 1107-amino-acid polypeptide reads, in one-letter code: Enolase-phosphatase E1 (1107 aa).

Mg(2+)-binding residues include Asp19 and Glu21. Substrate is bound by residues 152–153 (SS) and Lys186. Residue Asp211 participates in Mg(2+) binding. Residues 258–1107 (SVKSTETENG…SATPSVETES (850 aa)) are disordered. The segment covering 260–289 (KSTETENGAEKETVTESTEKVADESEKETE) has biased composition (basic and acidic residues). The segment covering 291-306 (ETAAAETENGAEAENG) has biased composition (low complexity). The segment covering 366–376 (DAMDVDAEMTD) has biased composition (acidic residues). Basic and acidic residues-rich tracts occupy residues 393 to 427 (VTEK…DTKQ) and 435 to 462 (GEDK…KEEE). Acidic residues predominate over residues 475 to 485 (DKMDVDEEDSA). Basic and acidic residues-rich tracts occupy residues 486 to 512 (VIEK…KEEN), 534 to 548 (DETK…KEES), 572 to 586 (TVEK…SKSE), 593 to 604 (TSEKKVEDKSAN), 610 to 686 (KEPK…EVKA), and 693 to 776 (DESK…KSVD). The segment covering 794 to 803 (EETSATTEAQ) has biased composition (low complexity). 2 stretches are compositionally biased toward basic and acidic residues: residues 804-838 (ATKE…DAKS) and 849-908 (KEMK…ETKG). Residues 909–919 (VEATTAGPVEE) show a composition bias toward low complexity. Residues 920 to 935 (VAVEATEEDVAMEAES) show a composition bias toward acidic residues. Composition is skewed to basic and acidic residues over residues 937–957 (DAVK…KLDS), 1001–1028 (DEVK…EADS), and 1035–1047 (NHDE…KEND). Residues 1048–1083 (TSASNIEEASSATTTTTNGTSTESDSSSTTPSSETV) are compositionally biased toward low complexity.

It belongs to the HAD-like hydrolase superfamily. MasA/MtnC family. Monomer. Mg(2+) is required as a cofactor.

The protein localises to the cytoplasm. It localises to the nucleus. It catalyses the reaction 5-methylsulfanyl-2,3-dioxopentyl phosphate + H2O = 1,2-dihydroxy-5-(methylsulfanyl)pent-1-en-3-one + phosphate. The protein operates within amino-acid biosynthesis; L-methionine biosynthesis via salvage pathway; L-methionine from S-methyl-5-thio-alpha-D-ribose 1-phosphate: step 3/6. It functions in the pathway amino-acid biosynthesis; L-methionine biosynthesis via salvage pathway; L-methionine from S-methyl-5-thio-alpha-D-ribose 1-phosphate: step 4/6. In terms of biological role, bifunctional enzyme that catalyzes the enolization of 2,3-diketo-5-methylthiopentyl-1-phosphate (DK-MTP-1-P) into the intermediate 2-hydroxy-3-keto-5-methylthiopentenyl-1-phosphate (HK-MTPenyl-1-P), which is then dephosphorylated to form the acireductone 1,2-dihydroxy-3-keto-5-methylthiopentene (DHK-MTPene). In Aedes aegypti (Yellowfever mosquito), this protein is Enolase-phosphatase E1.